We begin with the raw amino-acid sequence, 126 residues long: Small ribosomal subunit protein bS6 (126 aa).

Residues 101 to 126 (VMMKAKEERTAKREDAAPRAEEAAAE) are disordered. The span at 104–126 (KAKEERTAKREDAAPRAEEAAAE) shows a compositional bias: basic and acidic residues.

It belongs to the bacterial ribosomal protein bS6 family.

In terms of biological role, binds together with bS18 to 16S ribosomal RNA. This chain is Small ribosomal subunit protein bS6, found in Aliivibrio salmonicida (strain LFI1238) (Vibrio salmonicida (strain LFI1238)).